We begin with the raw amino-acid sequence, 145 residues long: Large ribosomal subunit protein uL13 (145 aa).

Belongs to the universal ribosomal protein uL13 family. Part of the 50S ribosomal subunit.

This protein is one of the early assembly proteins of the 50S ribosomal subunit, although it is not seen to bind rRNA by itself. It is important during the early stages of 50S assembly. In Bacillus thuringiensis (strain Al Hakam), this protein is Large ribosomal subunit protein uL13.